Here is a 499-residue protein sequence, read N- to C-terminus: Lysine--tRNA ligase (499 aa).

E408 and E415 together coordinate Mg(2+).

Belongs to the class-II aminoacyl-tRNA synthetase family. As to quaternary structure, homodimer. Mg(2+) serves as cofactor.

It is found in the cytoplasm. It catalyses the reaction tRNA(Lys) + L-lysine + ATP = L-lysyl-tRNA(Lys) + AMP + diphosphate. In Thermoanaerobacter pseudethanolicus (strain ATCC 33223 / 39E) (Clostridium thermohydrosulfuricum), this protein is Lysine--tRNA ligase.